A 149-amino-acid polypeptide reads, in one-letter code: Calmodulin (149 aa).

Ala2 carries the N-acetylalanine modification. EF-hand domains follow at residues 8-43 (EQIAEFKEAFSLFDKDGDGTITTKELGTVMRSLGQN), 44-79 (PTEAELQDMINEVDADGNGTIDFPEFLTMMARKMKD), 81-116 (DSEEEIREAFRVFDKDGNGYISAAELRHVMTNLGEK), and 117-149 (LTDEEVDEMIREADIDGDGQVNYEEFVQIMTAK). The Ca(2+) site is built by Asp21, Asp23, Asp25, Thr27, Glu32, Asp57, Asp59, Asn61, Thr63, Glu68, Asp94, Asp96, Asn98, Tyr100, and Glu105. The residue at position 116 (Lys116) is an N6,N6,N6-trimethyllysine. Positions 130, 132, 134, 136, and 141 each coordinate Ca(2+).

Belongs to the calmodulin family.

In terms of biological role, calmodulin acts as part of a calcium signal transduction pathway by mediating the control of a large number of enzymes, ion channels, aquaporins and other proteins through calcium-binding. Calcium-binding is required for the activation of calmodulin. Among the enzymes to be stimulated by the calmodulin-calcium complex are a number of protein kinases, such as myosin light-chain kinases and calmodulin-dependent protein kinase type II (CaMK2), and phosphatases. This Epinephelus akaara (Hong Kong grouper) protein is Calmodulin (calm).